The following is a 185-amino-acid chain: Ribosome-recycling factor (185 aa).

The protein belongs to the RRF family.

The protein resides in the cytoplasm. Its function is as follows. Responsible for the release of ribosomes from messenger RNA at the termination of protein biosynthesis. May increase the efficiency of translation by recycling ribosomes from one round of translation to another. This is Ribosome-recycling factor from Bacillus anthracis (strain A0248).